The primary structure comprises 370 residues: DNA primase small subunit PriS (370 aa).

Residues Asp-92, Asp-94, and Asp-272 contribute to the active site.

The protein belongs to the eukaryotic-type primase small subunit family. As to quaternary structure, heterodimer of a small subunit (PriS) and a large subunit (PriL). It depends on Mg(2+) as a cofactor. The cofactor is Mn(2+).

Its function is as follows. Catalytic subunit of DNA primase, an RNA polymerase that catalyzes the synthesis of short RNA molecules used as primers for DNA polymerase during DNA replication. The small subunit contains the primase catalytic core and has DNA synthesis activity on its own. Binding to the large subunit stabilizes and modulates the activity, increasing the rate of DNA synthesis while decreasing the length of the DNA fragments, and conferring RNA synthesis capability. The DNA polymerase activity may enable DNA primase to also catalyze primer extension after primer synthesis. May also play a role in DNA repair. This is DNA primase small subunit PriS from Picrophilus torridus (strain ATCC 700027 / DSM 9790 / JCM 10055 / NBRC 100828 / KAW 2/3).